Reading from the N-terminus, the 208-residue chain is Uracil phosphoribosyltransferase (208 aa).

5-phospho-alpha-D-ribose 1-diphosphate contacts are provided by residues arginine 78, arginine 103, and 130 to 138 (DPMLATGGS). Uracil-binding positions include isoleucine 193 and 198-200 (GDA). 5-phospho-alpha-D-ribose 1-diphosphate is bound at residue aspartate 199.

It belongs to the UPRTase family. Mg(2+) is required as a cofactor.

The enzyme catalyses UMP + diphosphate = 5-phospho-alpha-D-ribose 1-diphosphate + uracil. It participates in pyrimidine metabolism; UMP biosynthesis via salvage pathway; UMP from uracil: step 1/1. Allosterically activated by GTP. In terms of biological role, catalyzes the conversion of uracil and 5-phospho-alpha-D-ribose 1-diphosphate (PRPP) to UMP and diphosphate. This chain is Uracil phosphoribosyltransferase, found in Blochmanniella pennsylvanica (strain BPEN).